An 806-amino-acid polypeptide reads, in one-letter code: Phenylalanine--tRNA ligase beta subunit (806 aa).

A tRNA-binding domain is found at 40-153 (FNSPDYLQLA…ADAIIIDHVS (114 aa)). Positions 413-487 (PFSKKLTVNF…KLIDINKLKP (75 aa)) constitute a B5 domain. Mg(2+) contacts are provided by D465, D471, E474, and E475.

The protein belongs to the phenylalanyl-tRNA synthetase beta subunit family. Type 1 subfamily. As to quaternary structure, tetramer of two alpha and two beta subunits. Mg(2+) is required as a cofactor.

The protein resides in the cytoplasm. The enzyme catalyses tRNA(Phe) + L-phenylalanine + ATP = L-phenylalanyl-tRNA(Phe) + AMP + diphosphate + H(+). The chain is Phenylalanine--tRNA ligase beta subunit (pheT) from Mycoplasma genitalium (strain ATCC 33530 / DSM 19775 / NCTC 10195 / G37) (Mycoplasmoides genitalium).